A 273-amino-acid polypeptide reads, in one-letter code: tRNA pseudouridine synthase A (273 aa).

Asp-52 (nucleophile) is an active-site residue. Tyr-110 is a substrate binding site.

The protein belongs to the tRNA pseudouridine synthase TruA family. As to quaternary structure, homodimer.

The catalysed reaction is uridine(38/39/40) in tRNA = pseudouridine(38/39/40) in tRNA. Its function is as follows. Formation of pseudouridine at positions 38, 39 and 40 in the anticodon stem and loop of transfer RNAs. The protein is tRNA pseudouridine synthase A of Cupriavidus pinatubonensis (strain JMP 134 / LMG 1197) (Cupriavidus necator (strain JMP 134)).